Here is a 56-residue protein sequence, read N- to C-terminus: uncharacterized protein (56 aa).

Residues 21–38 (HTHTPHPHHTHTHTHHTP) show a composition bias toward basic residues. The tract at residues 21–40 (HTHTPHPHHTHTHTHHTPTH) is disordered.

This is an uncharacterized protein from Saccharomyces cerevisiae (strain ATCC 204508 / S288c) (Baker's yeast).